The chain runs to 157 residues: MTQLTCFKAYDIRGELGEELNEDIAYRIGRAYGEFLKPGKIVVGGDVRLTSESLNVALARGLMDAGTDVLDIGLSGTEEIYFATFHLGVDGGIEVTASHNPMNYNGMKLVRENAKPISGDTGLRDIQRLAEENQFPPVDPARRGTLRQISVLKEYVD.

The active-site Phosphoserine intermediate is Ser-98. Ser-98 lines the Mg(2+) pocket.

It belongs to the phosphohexose mutase family. Mg(2+) serves as cofactor.

It carries out the reaction alpha-D-mannose 1-phosphate = D-mannose 6-phosphate. Its pathway is nucleotide-sugar biosynthesis; GDP-alpha-D-mannose biosynthesis; alpha-D-mannose 1-phosphate from D-fructose 6-phosphate: step 2/2. The protein operates within capsule biogenesis; capsule polysaccharide biosynthesis. In terms of biological role, involved in the biosynthesis of the K2 capsular polysaccharide biosynthesis. This Klebsiella pneumoniae protein is Phosphomannomutase (manB).